We begin with the raw amino-acid sequence, 422 residues long: O-mycaminosyltylonolide 6-deoxyallosyltransferase (422 aa).

It belongs to the glycosyltransferase 28 family.

The catalysed reaction is 5-O-beta-D-mycaminosyltylonolide + dTDP-6-deoxy-alpha-D-allose = demethyllactenocin + dTDP + H(+). Involved in the biosynthesis of the macrolide antibiotic tylosin derived from the polyketide lactone tylactone. Catalyzes the transfer of 6-deoxy-alpha-D-allose from dTDP-6-deoxy-alpha-D-allose to O-mycaminosyltylonolide (OMT) to yield demethyllactenocin. The polypeptide is O-mycaminosyltylonolide 6-deoxyallosyltransferase (Streptomyces fradiae (Streptomyces roseoflavus)).